The chain runs to 707 residues: ATP-dependent RNA helicase DHX33 (707 aa).

Residues M1 to P64 are disordered. The tract at residues M1–R80 is required for nucleolar location. Gly residues predominate over residues G39 to R49. The segment covering R50–P64 has biased composition (low complexity). One can recognise a Helicase ATP-binding domain in the interval L84–E252. G97–T104 contributes to the ATP binding site. Positions D194–H197 match the DEAH box motif. The region spanning S277–K450 is the Helicase C-terminal domain. An HA2; required for interaction with EIF3G and RPL26 region spans residues A471–L562. The Critical for rDNA-binding motif lies at G547–D558.

Belongs to the DEAD box helicase family. DEAH subfamily. In terms of assembly, interacts with UBTF. Interacts with DDX3X, EIF3G and EIF3H; the interaction is independent of RNA. Interacts (via HA2 region and Helicase C-terminal domain) with the components of the large ribosomal subunit RPL3, RPL7, RPL26 and RPL27. Interacts (via DEAH box) with NLRP3 (via NACHT domain). Binds to mRNA. Binds to double-stranded RNA (via the helicase C-terminal domain). Interacts (via the helicase C-terminal domain) with MAVS. Ubiquitinated, leading to its degradation by the proteasome. Deubiquitinated by USP36.

Its subcellular location is the nucleus. It localises to the nucleolus. It is found in the nucleoplasm. The protein resides in the cytoplasm. The protein localises to the inflammasome. The catalysed reaction is ATP + H2O = ADP + phosphate + H(+). Its function is as follows. Implicated in nucleolar organization, ribosome biogenesis, protein synthesis and cytoplasmic dsRNA sensing. Stimulates RNA polymerase I transcription of the 47S precursor rRNA. Associates with ribosomal DNA (rDNA) loci where it is involved in POLR1A recruitment. In the cytoplasm, promotes elongation-competent 80S ribosome assembly at the late stage of mRNA translation initiation. Senses cytosolic dsRNA mediating NLRP3 inflammasome formation in macrophages and type I interferon production in myeloid dendritic cells. Required for NLRP3 activation induced by viral dsRNA and bacterial RNA. In dendritic cells, required for induction of type I interferon production induced by cytoplasmic dsRNA via the activation of MAPK and NF-kappa-B signaling pathways. This is ATP-dependent RNA helicase DHX33 from Homo sapiens (Human).